A 224-amino-acid polypeptide reads, in one-letter code: Ribonuclease 3 (224 aa).

The RNase III domain maps to 4–127 (IEKLEQSLTY…IIGAIHLEAG (124 aa)). Glutamate 40 contacts Mg(2+). Aspartate 44 is a catalytic residue. Mg(2+) contacts are provided by aspartate 113 and glutamate 116. Residue glutamate 116 is part of the active site. Positions 154-223 (DYKTKLQEIT…AKIALEKLGA (70 aa)) constitute a DRBM domain.

The protein belongs to the ribonuclease III family. In terms of assembly, homodimer. It depends on Mg(2+) as a cofactor.

Its subcellular location is the cytoplasm. The enzyme catalyses Endonucleolytic cleavage to 5'-phosphomonoester.. In terms of biological role, digests double-stranded RNA. Involved in the processing of primary rRNA transcript to yield the immediate precursors to the large and small rRNAs (23S and 16S). Processes some mRNAs, and tRNAs when they are encoded in the rRNA operon. Processes pre-crRNA and tracrRNA of type II CRISPR loci if present in the organism. The polypeptide is Ribonuclease 3 (Campylobacter jejuni subsp. jejuni serotype O:6 (strain 81116 / NCTC 11828)).